A 99-amino-acid chain; its full sequence is NADH-quinone oxidoreductase subunit K (99 aa).

A run of 3 helical transmembrane segments spans residues 3 to 23 (PDNY…GVLL), 28 to 48 (IVVF…FVAF), and 59 to 79 (VVAF…LAII).

It belongs to the complex I subunit 4L family. NDH-1 is composed of 14 different subunits. Subunits NuoA, H, J, K, L, M, N constitute the membrane sector of the complex.

It is found in the cell membrane. The enzyme catalyses a quinone + NADH + 5 H(+)(in) = a quinol + NAD(+) + 4 H(+)(out). NDH-1 shuttles electrons from NADH, via FMN and iron-sulfur (Fe-S) centers, to quinones in the respiratory chain. The immediate electron acceptor for the enzyme in this species is believed to be a menaquinone. Couples the redox reaction to proton translocation (for every two electrons transferred, four hydrogen ions are translocated across the cytoplasmic membrane), and thus conserves the redox energy in a proton gradient. This Mycobacterium sp. (strain JLS) protein is NADH-quinone oxidoreductase subunit K.